Here is a 103-residue protein sequence, read N- to C-terminus: Flagellar hook-basal body complex protein FliE (103 aa).

Belongs to the FliE family.

The protein localises to the bacterial flagellum basal body. The polypeptide is Flagellar hook-basal body complex protein FliE (Photorhabdus laumondii subsp. laumondii (strain DSM 15139 / CIP 105565 / TT01) (Photorhabdus luminescens subsp. laumondii)).